Consider the following 534-residue polypeptide: MAKDLQVLTALDVAKTQLYHFTAIVIAGMGFFTDAYDLFCISLVTKLLGRIYYHHEGALKPGSLPPNVAAAVNGVAFCGTLAGQLFFGWLGDKLGRKKVYGMTLMLMVICSIASGLSFGHTPKSVMATLCFFRFWLGFGIGGDYPLSATIMSEYANKKTRGAFIAAVFAMQGFGILAGGMVAIIVSAAFKNQFPAPAYKDGALASTISQADFVWRIIVMFGAIPTALTYYWRMKMPETARYTALVAKNLKQATNDMSKVLQVEIEPEQEKVEEISQGNDFGLFTKQFLRRHGLHLLGTASTWFLLDIAFYSQNLFQKDIFSAIGWIPPAETMNALEEVYRIARAQTLIALCSTVPGYWFTVAFIDKIGRFAIQLMGFFFMTVFMFALAIPYTHWTHKDNRIGFVIMYSLTFFFANFGPNATTFVVPAEIFPARLRSTCHGISAAAGKAGAMVGAFGFLYAAQSTDPKKTDAGYPAGIGVRNSLIVLGCVNFLGMLFTLLVPESKGKSLEEMSRENEGEDENGTEMRASGRTVPV.

At 1–23 (MAKDLQVLTALDVAKTQLYHFTA) the chain is on the cytoplasmic side. The helical transmembrane segment at 24–44 (IVIAGMGFFTDAYDLFCISLV) threads the bilayer. Topologically, residues 45-69 (TKLLGRIYYHHEGALKPGSLPPNVA) are extracellular. A helical transmembrane segment spans residues 70–90 (AAVNGVAFCGTLAGQLFFGWL). Residues 91–98 (GDKLGRKK) lie on the Cytoplasmic side of the membrane. Residues 99-119 (VYGMTLMLMVICSIASGLSFG) form a helical membrane-spanning segment. Residues 120–124 (HTPKS) lie on the Extracellular side of the membrane. Residues 125 to 145 (VMATLCFFRFWLGFGIGGDYP) traverse the membrane as a helical segment. Residues 146–163 (LSATIMSEYANKKTRGAF) are Cytoplasmic-facing. Residues 164–184 (IAAVFAMQGFGILAGGMVAII) traverse the membrane as a helical segment. Residues 185 to 210 (VSAAFKNQFPAPAYKDGALASTISQA) are Extracellular-facing. A helical transmembrane segment spans residues 211–231 (DFVWRIIVMFGAIPTALTYYW). Topologically, residues 232–290 (RMKMPETARYTALVAKNLKQATNDMSKVLQVEIEPEQEKVEEISQGNDFGLFTKQFLRR) are cytoplasmic. A helical membrane pass occupies residues 291-311 (HGLHLLGTASTWFLLDIAFYS). Residues 312–343 (QNLFQKDIFSAIGWIPPAETMNALEEVYRIAR) are Extracellular-facing. The helical transmembrane segment at 344–364 (AQTLIALCSTVPGYWFTVAFI) threads the bilayer. Residues 365–369 (DKIGR) lie on the Cytoplasmic side of the membrane. A helical membrane pass occupies residues 370–390 (FAIQLMGFFFMTVFMFALAIP). Residues 391-400 (YTHWTHKDNR) are Extracellular-facing. Residues 401 to 421 (IGFVIMYSLTFFFANFGPNAT) form a helical membrane-spanning segment. Topologically, residues 422–440 (TFVVPAEIFPARLRSTCHG) are cytoplasmic. A helical membrane pass occupies residues 441 to 461 (ISAAAGKAGAMVGAFGFLYAA). At 462–481 (QSTDPKKTDAGYPAGIGVRN) the chain is on the extracellular side. A helical membrane pass occupies residues 482–502 (SLIVLGCVNFLGMLFTLLVPE). The Cytoplasmic portion of the chain corresponds to 503–534 (SKGKSLEEMSRENEGEDENGTEMRASGRTVPV). Positions 507–534 (SLEEMSRENEGEDENGTEMRASGRTVPV) are disordered.

The protein belongs to the major facilitator superfamily. Phosphate:H(+) symporter (TC 2.A.1.9) family.

The protein resides in the cell membrane. It catalyses the reaction phosphate(in) + H(+)(in) = phosphate(out) + H(+)(out). Low-affinity transporter for external inorganic phosphate (Pi). Involved in phosphorus (P) remobilization from dying to developing tissues during corolla senescence in an ethylene-dependent manner. This is Low affinity inorganic phosphate transporter 1 from Petunia hybrida (Petunia).